The primary structure comprises 521 residues: Vang-like protein 2 (521 aa).

A disordered region spans residues 1 to 81 (MDTESQYSGY…TTVVTGTSEH (81 aa)). Residues 1–108 (MDTESQYSGY…VPLDCSRHLG (108 aa)) lie on the Cytoplasmic side of the membrane. Over residues 15-33 (GHSRSSRKHRDRRDRHRSK) the composition is skewed to basic residues. A compositionally biased stretch (basic and acidic residues) spans 57 to 67 (ESTRGDERDDN). Over residues 69–81 (GETTTVVTGTSEH) the composition is skewed to low complexity. A helical transmembrane segment spans residues 109-129 (VAAGAILALLSFLTPLAFLLL). The Extracellular portion of the chain corresponds to 130–147 (PPLLWREELEPCGTACEG). The chain crosses the membrane as a helical span at residues 148–168 (LFISVAFKLLILLLGSWALFF). Residues 169–178 (RRPKASLPRV) are Cytoplasmic-facing. The chain crosses the membrane as a helical span at residues 179-199 (FVLRALLMVLVFLLVISYWLF). The Extracellular segment spans residues 200 to 217 (YGVRILDARERSYQGVVQ). A helical membrane pass occupies residues 218–238 (FAVSLVDALLFVHYLAVVLLE). Over 239–521 (LRQLQPQFTL…VMRLQSETSV (283 aa)) the chain is Cytoplasmic.

It belongs to the Vang family. As to quaternary structure, homodimer and heterodimer with Vangl1. Interacts through its C-terminal region with the N-terminal half of DVL1, DVL2 and DVL3. The PDZ domain of DVL1, DVL2 and DVL3 is required for the interaction. Variants Glu-255 and Asn-464 impair interaction with the DVL proteins. Also interacts with the PDZ domains of MAGI3, SCRIB/SCRB1 and FZD3. Interacts with PRICKLE3. In terms of tissue distribution, primarily expressed in the brain and epididymis. Not detected in the cochlea of Lp mice.

Its subcellular location is the cell membrane. In terms of biological role, involved in the control of early morphogenesis and patterning of both axial midline structures and the development of neural plate. Plays a role in the regulation of planar cell polarity, particularly in the orientation of stereociliary bundles in the cochlea. Required for polarization and movement of myocardializing cells in the outflow tract and seems to act via RHOA signaling to regulate this process. Required for cell surface localization of FZD3 and FZD6 in the inner ear. The protein is Vang-like protein 2 (Vangl2) of Mus musculus (Mouse).